The following is a 136-amino-acid chain: Protein PsiE (136 aa).

Transmembrane regions (helical) follow at residues 15-35 (ILQN…VVFL), 55-75 (YELV…ALIV), 83-103 (HFPL…LIIV), and 108-128 (PMDV…LWLC).

It belongs to the PsiE family.

The protein localises to the cell inner membrane. The polypeptide is Protein PsiE (Salmonella gallinarum (strain 287/91 / NCTC 13346)).